A 334-amino-acid polypeptide reads, in one-letter code: Leucine-rich repeat-containing protein 39 (334 aa).

LRR repeat units lie at residues Glu59 to Leu82, Asn83 to Phe105, Gln106 to Leu128, Thr129 to Cys151, Ser153 to Leu175, Leu176 to Met198, Pro199 to Met221, Ser223 to Met244, Lys245 to Ser269, and Phe272 to Glu295.

As to quaternary structure, interacts with MYH7 (via C-terminus). Expressed in heart and skeletal muscle (at protein level). Also detected in kidney (at protein level). Not detected in other tissues tested (at protein level).

The protein localises to the cytoplasm. Its subcellular location is the myofibril. The protein resides in the sarcomere. It is found in the m line. Its function is as follows. Component of the sarcomeric M-band which plays a role in myocyte response to biomechanical stress. May regulate expression of other M-band proteins via an SRF-dependent pathway. Important for normal contractile function in heart. This Rattus norvegicus (Rat) protein is Leucine-rich repeat-containing protein 39.